A 1898-amino-acid polypeptide reads, in one-letter code: 1-phosphatidylinositol 4,5-bisphosphate phosphodiesterase epsilon-1 (1898 aa).

The Ras-GEF domain occupies 66–328; sequence FPEEVAFQLS…EREQKEKEAK (263 aa). 2 disordered regions span residues 419–444 and 569–722; these read QPLDSGRGAPSPMPSGRTPGTGGVGV and TNTN…GPSG. Polar residues predominate over residues 569 to 583; that stretch reads TNTNATRPNDSSLSS. The span at 590–605 shows a compositional bias: basic residues; that stretch reads SRLKNLKNAMQKKLRG. 3 stretches are compositionally biased toward low complexity: residues 625 to 637, 666 to 687, and 701 to 716; these read PPSIKSQISSQSG, YTPRSRTPTSSSYGGRSVGGRS, and SGSISSSGQMSIQVSG. Residues 910–1058 enclose the PI-PLC X-box domain; it reads EDLRYPLSHY…MKNKILIKNK (149 aa). Residues His-925 and His-970 contribute to the active site. 2 disordered regions span residues 1082–1178 and 1238–1274; these read QLNL…DRKT and EEGPASASLSFSSRARTPSNLLNTPAPPRRQRSSTQL. Acidic residues predominate over residues 1098 to 1123; sequence TVDEVEDDDLDEFLDDEENEEDDQEE. A compositionally biased stretch (basic and acidic residues) spans 1124-1144; it reads VQVRSEKEDSPKTSKRAEKSA. Polar residues predominate over residues 1146-1155; that stretch reads NIKQQDSLCS. 2 stretches are compositionally biased toward low complexity: residues 1163–1172 and 1242–1253; these read KPSTSKTTSK and ASASLSFSSRAR. One can recognise a PI-PLC Y-box domain in the interval 1279–1385; the sequence is AAEFLGSVRA…CGYQLKPRCL (107 aa). The 127-residue stretch at 1391 to 1517 folds into the C2 domain; sequence LLYNKFLPLS…PLRTPTNLPI (127 aa). A Ras-associating 1 domain is found at 1570–1665; that stretch reads QIFVLRITGA…RRFVLRKKGS (96 aa). Residues 1680 to 1694 show a composition bias toward low complexity; sequence GTSGSSTSVSPSPLT. Positions 1680-1711 are disordered; sequence GTSGSSTSVSPSPLTKDGHVKSASSNQLHGRS. Residues 1738–1857 form the Ras-associating 2 domain; the sequence is DTFLVCVHNV…GRFVLENRKD (120 aa).

Interacts (via Ras-associating domain 1) with let-60 (in GTP-bound form). Ca(2+) is required as a cofactor. In terms of tissue distribution, expressed in the spermatheca, vulva, intestine and excretory cells. Expressed in sensory neurons AWC, AFD, ASE, ASG and BAG, interneurons, ventral nerve cord neurons and tail neurons. Expressed in body muscles.

It catalyses the reaction a 1,2-diacyl-sn-glycero-3-phospho-(1D-myo-inositol-4,5-bisphosphate) + H2O = 1D-myo-inositol 1,4,5-trisphosphate + a 1,2-diacyl-sn-glycerol + H(+). In terms of biological role, the production of the second messenger molecules diacylglycerol (DAG) and inositol 1,4,5-trisphosphate (IP3) is mediated by activated phosphatidylinositol-specific phospholipase C enzymes. plc-1 is a bifunctional enzyme which also regulates small GTPases of the Ras superfamily through its Ras guanine-exchange factor (RasGEF) activity. By activating IP3 receptor itr-1-mediated intracellular Ca(2+) release via the production of IP3, regulates ovulation by controlling contraction and/or dilation of the distal spermatheca valve during oocyte entry and the timing of the dilation of the spermatheca-uterine valve during oocyte exit. In a similar manner, plays an essential role in epidermal morphogenesis by regulating migration of epidermal cells during ventral closure and to a lesser extent by regulating epidermal cell dorsal intercalation. Involved in the immune response to S.aureus bacterium by activating kinase dkf-1 via the production of DAG which in turn activates transcription factor hlh-30. In ASER neurons, required for adjusting the orientation behavior in salt gradients based on the memory of previous salt concentration encountered. The polypeptide is 1-phosphatidylinositol 4,5-bisphosphate phosphodiesterase epsilon-1 (Caenorhabditis elegans).